We begin with the raw amino-acid sequence, 186 residues long: Interferon beta (186 aa).

The signal sequence occupies residues methionine 1–serine 21. Tyrosine 24 carries the phosphotyrosine modification. A disulfide bond links cysteine 52 and cysteine 161. N-linked (GlcNAc...) asparagine glycosylation is found at asparagine 101 and asparagine 136.

This sequence belongs to the alpha/beta interferon family. As to quaternary structure, monomer.

It is found in the secreted. In terms of biological role, type I interferon cytokine that plays a key role in the innate immune response to infection, developing tumors and other inflammatory stimuli. Signals via binding to high-affinity (IFNAR2) and low-affinity (IFNAR1) heterodimeric receptor, activating the canonical Jak-STAT signaling pathway resulting in transcriptional activation or repression of interferon-regulated genes that encode the effectors of the interferon response, such as antiviral proteins, regulators of cell proliferation and differentiation, and immunoregulatory proteins. Signals mostly via binding to a IFNAR1-IFNAR2 heterodimeric receptor, but can also function with IFNAR1 alone and independently of Jak-STAT pathways. Elicits a wide variety of responses, including antiviral and antibacterial activities, and can regulate the development of B-cells, myelopoiesis and lipopolysaccharide (LPS)-inducible production of tumor necrosis factor. Plays a role in neuronal homeostasis by regulating dopamine turnover and protecting dopaminergic neurons: acts by promoting neuronal autophagy and alpha-synuclein clearance, thereby preventing dopaminergic neuron loss. IFNB1 is more potent than interferon-alpha (IFN-alpha) in inducing the apoptotic and antiproliferative pathways required for control of tumor cell growth. This Equus caballus (Horse) protein is Interferon beta (IFNB1).